Reading from the N-terminus, the 874-residue chain is Alanine--tRNA ligase (874 aa).

Positions 564, 568, 665, and 669 each coordinate Zn(2+).

The protein belongs to the class-II aminoacyl-tRNA synthetase family. Zn(2+) is required as a cofactor.

Its subcellular location is the cytoplasm. The enzyme catalyses tRNA(Ala) + L-alanine + ATP = L-alanyl-tRNA(Ala) + AMP + diphosphate. In terms of biological role, catalyzes the attachment of alanine to tRNA(Ala) in a two-step reaction: alanine is first activated by ATP to form Ala-AMP and then transferred to the acceptor end of tRNA(Ala). Also edits incorrectly charged Ser-tRNA(Ala) and Gly-tRNA(Ala) via its editing domain. The protein is Alanine--tRNA ligase of Burkholderia cenocepacia (strain HI2424).